Reading from the N-terminus, the 228-residue chain is Glycerol-3-phosphate acyltransferase (228 aa).

Transmembrane regions (helical) follow at residues M1–T21, V56–V76, M104–F124, I136–L156, I161–G181, and P183–S203.

Belongs to the PlsY family. In terms of assembly, probably interacts with PlsX.

It is found in the cell inner membrane. It carries out the reaction an acyl phosphate + sn-glycerol 3-phosphate = a 1-acyl-sn-glycero-3-phosphate + phosphate. It functions in the pathway lipid metabolism; phospholipid metabolism. Its function is as follows. Catalyzes the transfer of an acyl group from acyl-phosphate (acyl-PO(4)) to glycerol-3-phosphate (G3P) to form lysophosphatidic acid (LPA). This enzyme utilizes acyl-phosphate as fatty acyl donor, but not acyl-CoA or acyl-ACP. In Trichodesmium erythraeum (strain IMS101), this protein is Glycerol-3-phosphate acyltransferase.